The primary structure comprises 316 residues: GPI-specific phospholipase A2-like PGAP3 (316 aa).

The first 18 residues, 1-18, serve as a signal peptide directing secretion; that stretch reads MAPFLVLFLAGVVAASRG. Residues 19 to 93 are Lumenal-facing; the sequence is DREPVYRDCV…QFHGKWPFSR (75 aa). Residue Asn35 is glycosylated (N-linked (GlcNAc...) asparagine). A helical transmembrane segment spans residues 94–114; that stretch reads FLFFQEPASALASFLNGVASL. Topologically, residues 115–132 are cytoplasmic; the sequence is LMLLRYRSSVPSSCQMYR. The helical transmembrane segment at 133 to 153 threads the bilayer; that stretch reads TCLAFSMVSVNAWFWSTIFHT. Residues 154–163 are Lumenal-facing; it reads RDTALTEKMD. Residues 164–180 traverse the membrane as a helical segment; sequence YFCASSVILHSIYLCCM. At 181 to 182 the chain is on the cytoplasmic side; that stretch reads RT. The helical transmembrane segment at 183–203 threads the bilayer; that stretch reads FGLQYPSIANGFGAFLVLLFA. Residues 204–218 are Lumenal-facing; the sequence is CHVSYLTLGRFDYSY. A helical transmembrane segment spans residues 219–239; it reads NMAANTGFGVLNLMWWLAWCF. Topologically, residues 240 to 251 are cytoplasmic; the sequence is RRRFHQPYLWKC. The helical transmembrane segment at 252 to 272 threads the bilayer; it reads VLVVISLQSLALLELLDFPPV. Residue Met273 is a topological domain, lumenal. Residues 274-293 traverse the membrane as a helical segment; sequence WILDAHALWHFSTVPLHFLF. Residues 294 to 316 are Cytoplasmic-facing; the sequence is YSFLKDDSLYLLKINHDDIPKLD.

Belongs to the PGAP3 family.

It localises to the golgi apparatus membrane. Its function is as follows. Involved in the fatty acid remodeling steps of GPI-anchor maturation where the unsaturated acyl chain at sn-2 of inositol phosphate is replaced by a saturated stearoyl chain. May catalyze the first step of the fatty acid remodeling, by removing the unsaturated acyl chain at sn-2 of inositol phosphate, generating a lyso-GPI intermediate. The fatty acid remodeling steps is critical for the integration of GPI-APs into lipid rafts. This is GPI-specific phospholipase A2-like PGAP3 from Xenopus tropicalis (Western clawed frog).